Reading from the N-terminus, the 237-residue chain is tRNA1(Val) (adenine(37)-N6)-methyltransferase (237 aa).

This sequence belongs to the methyltransferase superfamily. tRNA (adenine-N(6)-)-methyltransferase family.

The protein resides in the cytoplasm. It carries out the reaction adenosine(37) in tRNA1(Val) + S-adenosyl-L-methionine = N(6)-methyladenosine(37) in tRNA1(Val) + S-adenosyl-L-homocysteine + H(+). Functionally, specifically methylates the adenine in position 37 of tRNA(1)(Val) (anticodon cmo5UAC). This chain is tRNA1(Val) (adenine(37)-N6)-methyltransferase, found in Tolumonas auensis (strain DSM 9187 / NBRC 110442 / TA 4).